Reading from the N-terminus, the 173-residue chain is Photosystem I assembly protein Ycf3 (173 aa).

3 TPR repeats span residues 35–68 (AFVYYRDGMSAQAEGEYAEALEYYEEALTLEEDT), 72–105 (GYILYNMGLIYASNGDHDKALELYHQAIELNPRL), and 120–153 (GEKAKETGDHDGGEALFDQAADYWIRAIRMAPNN).

The protein belongs to the Ycf3 family.

The protein resides in the cellular thylakoid membrane. Essential for the assembly of the photosystem I (PSI) complex. May act as a chaperone-like factor to guide the assembly of the PSI subunits. This chain is Photosystem I assembly protein Ycf3, found in Nostoc sp. (strain PCC 7120 / SAG 25.82 / UTEX 2576).